A 294-amino-acid polypeptide reads, in one-letter code: Basic endochitinase (294 aa).

The signal sequence occupies residues 1–24; that stretch reads MNIKVSLLFILPIFLLLLTSKVKA. The region spanning 25-294 is the GH18 domain; the sequence is GDIVVYWGQD…GYSSAIRGAV (270 aa). 2 disulfide bridges follow: Cys44/Cys91 and Cys74/Cys81. Residue Glu151 is the Proton donor of the active site. The cysteines at positions 182 and 211 are disulfide-linked.

This sequence belongs to the glycosyl hydrolase 18 family. Chitinase class II subfamily.

The catalysed reaction is Random endo-hydrolysis of N-acetyl-beta-D-glucosaminide (1-&gt;4)-beta-linkages in chitin and chitodextrins.. Functionally, this protein functions as a defense against chitin containing fungal pathogens. The chain is Basic endochitinase from Nicotiana tabacum (Common tobacco).